The sequence spans 235 residues: Ubiquinone biosynthesis O-methyltransferase (235 aa).

S-adenosyl-L-methionine-binding residues include arginine 39, glycine 59, aspartate 80, and methionine 124.

The protein belongs to the methyltransferase superfamily. UbiG/COQ3 family.

The catalysed reaction is a 3-demethylubiquinol + S-adenosyl-L-methionine = a ubiquinol + S-adenosyl-L-homocysteine + H(+). The enzyme catalyses a 3-(all-trans-polyprenyl)benzene-1,2-diol + S-adenosyl-L-methionine = a 2-methoxy-6-(all-trans-polyprenyl)phenol + S-adenosyl-L-homocysteine + H(+). It functions in the pathway cofactor biosynthesis; ubiquinone biosynthesis. O-methyltransferase that catalyzes the 2 O-methylation steps in the ubiquinone biosynthetic pathway. This Photobacterium profundum (strain SS9) protein is Ubiquinone biosynthesis O-methyltransferase.